Reading from the N-terminus, the 202-residue chain is NADH-quinone oxidoreductase subunit C (202 aa).

Belongs to the complex I 30 kDa subunit family. As to quaternary structure, NDH-1 is composed of 14 different subunits. Subunits NuoB, C, D, E, F, and G constitute the peripheral sector of the complex.

The protein resides in the cell inner membrane. It carries out the reaction a quinone + NADH + 5 H(+)(in) = a quinol + NAD(+) + 4 H(+)(out). Its function is as follows. NDH-1 shuttles electrons from NADH, via FMN and iron-sulfur (Fe-S) centers, to quinones in the respiratory chain. The immediate electron acceptor for the enzyme in this species is believed to be ubiquinone. Couples the redox reaction to proton translocation (for every two electrons transferred, four hydrogen ions are translocated across the cytoplasmic membrane), and thus conserves the redox energy in a proton gradient. The polypeptide is NADH-quinone oxidoreductase subunit C (Bartonella quintana (strain Toulouse) (Rochalimaea quintana)).